The chain runs to 59 residues: Potassium channel toxin alpha-KTx 4.7 (59 aa).

The N-terminal stretch at 1-22 is a signal peptide; sequence MKAFYGILIIFILISMLDLSQQ. 3 disulfide bridges follow: cysteine 29/cysteine 50, cysteine 35/cysteine 55, and cysteine 39/cysteine 57. An interaction with Ca(2+)-activated K(+) channels region spans residues 48–55; that stretch reads GKCMNGKC.

The protein belongs to the short scorpion toxin superfamily. Potassium channel inhibitor family. Alpha-KTx 04 subfamily. As to expression, expressed by the venom gland.

Its subcellular location is the secreted. Functionally, potently blocks Kv1.1/KCNA1 (85%), Kv1.2/KCNA2 (91%), Kv1.3/KCNA3 (89%), Kv1.6/KCNA6 (94%), and Shaker (97%). This chain is Potassium channel toxin alpha-KTx 4.7, found in Tityus stigmurus (Brazilian scorpion).